We begin with the raw amino-acid sequence, 538 residues long: Carboxypeptidase 2 (538 aa).

An N-terminal signal peptide occupies residues 1 to 21 (MVAYRFLTLISLGLGSHCVSA). Asparagine 46 carries N-linked (GlcNAc...) asparagine glycosylation. The tract at residues 53 to 76 (PAFTSPGTVSRGFSDGTSGPTRDE) is disordered. Residues 71–351 (GPTRDETMEG…VMAKSVLQTA (281 aa)) form the Peptidase M14 domain. The Zn(2+) site is built by histidine 136, glutamate 139, and histidine 224. Glutamate 322 acts as the Proton donor/acceptor in catalysis. 2 N-linked (GlcNAc...) asparagine glycosylation sites follow: asparagine 393 and asparagine 459.

Belongs to the peptidase M14 family. Zn(2+) is required as a cofactor.

Its subcellular location is the secreted. Its function is as follows. Extracellular metalloprotease that contributes to pathogenicity. The sequence is that of Carboxypeptidase 2 (MCPB) from Trichophyton rubrum (Athlete's foot fungus).